The sequence spans 115 residues: Large ribosomal subunit protein uL24 (115 aa).

It belongs to the universal ribosomal protein uL24 family. Part of the 50S ribosomal subunit.

One of two assembly initiator proteins, it binds directly to the 5'-end of the 23S rRNA, where it nucleates assembly of the 50S subunit. Functionally, one of the proteins that surrounds the polypeptide exit tunnel on the outside of the subunit. This is Large ribosomal subunit protein uL24 from Phytoplasma mali (strain AT).